The chain runs to 468 residues: Tissue alpha-L-fucosidase (468 aa).

The first 22 residues, 1–22 (MRSWVVGARLLLLLQLVLVLGA), serve as a signal peptide directing secretion. A Phosphothreonine modification is found at Thr173. Residues Asn244, Asn271, and Asn320 are each glycosylated (N-linked (GlcNAc...) asparagine).

Belongs to the glycosyl hydrolase 29 family. In terms of assembly, homotetramer.

It localises to the lysosome. It catalyses the reaction an alpha-L-fucoside + H2O = L-fucose + an alcohol. The enzyme catalyses a neolactoside IV(2)-alpha-Fuc-nLc4Cer(d18:1(4E)) + H2O = a neolactoside nLc4Cer(d18:1(4E)) + L-fucose. The catalysed reaction is a neolactoside IV(2)-alpha-Fuc-nLc4Cer(d18:0) + H2O = a neolactoside nLc4Cer(d18:0) + L-fucose. Functionally, alpha-L-fucosidase is responsible for hydrolyzing the alpha-1,6-linked fucose joined to the reducing-end N-acetylglucosamine of the carbohydrate moieties of glycoproteins. The polypeptide is Tissue alpha-L-fucosidase (FUCA1) (Bos taurus (Bovine)).